The sequence spans 756 residues: Cellulose synthase catalytic subunit [UDP-forming] (756 aa).

The next 4 helical transmembrane spans lie at 27–47, 49–69, 106–126, and 167–187; these read ASYI…TVTL, NNEQ…VGRG, GILG…LFLS, and LTVL…VYIL. Positions 147 to 242 are catalytic subdomain A; sequence DWPTVDIFIP…YILILDCDHI (96 aa). The active site involves Asp189. 2 residues coordinate substrate: Asp238 and Asp240. Positions 319 to 379 are catalytic subdomain B; that stretch reads EAIESIGGFA…GQRMRWARGM (61 aa). Asp335 is a catalytic residue. The next 5 helical transmembrane spans lie at 409 to 429, 432 to 452, 470 to 490, 517 to 537, and 551 to 571; these read FFFA…LFAG, IIAA…FHSI, VYET…LLFP, NIIF…ELIV, and LLNC…IAVG. Residues 576–681 enclose the PilZ domain; it reads QVRYNHRVEA…ERDIVRFVFG (106 aa). Residues 721–756 are disordered; that stretch reads NSRPKKKPLALPVERREPTTIHSGQTQEGKISRAAS. The span at 740–756 shows a compositional bias: polar residues; the sequence is TIHSGQTQEGKISRAAS.

The protein belongs to the glycosyltransferase 2 family. Mg(2+) serves as cofactor.

It is found in the cell inner membrane. It carries out the reaction [(1-&gt;4)-beta-D-glucosyl](n) + UDP-alpha-D-glucose = [(1-&gt;4)-beta-D-glucosyl](n+1) + UDP + H(+). It functions in the pathway glycan metabolism; bacterial cellulose biosynthesis. Its activity is regulated as follows. Activated by bis-(3'-5') cyclic diguanylic acid (c-di-GMP). Catalytic subunit of cellulose synthase. It polymerizes uridine 5'-diphosphate glucose to cellulose. The thick cellulosic mats generated by this enzyme probably provide a specialized protective environment to the bacterium. The polypeptide is Cellulose synthase catalytic subunit [UDP-forming] (bcsA) (Komagataeibacter sucrofermentans (strain ATCC 700178 / DSM 15973 / CECT 7291 / JCM 9730 / LMG 18788 / BPR 2001) (Acetobacter xylinus subsp. sucrofermentans)).